Here is a 517-residue protein sequence, read N- to C-terminus: ATP synthase subunit alpha 2 (517 aa).

173 to 180 (GDRQTGKT) contacts ATP.

This sequence belongs to the ATPase alpha/beta chains family. In terms of assembly, F-type ATPases have 2 components, CF(1) - the catalytic core - and CF(0) - the membrane proton channel. CF(1) has five subunits: alpha(3), beta(3), gamma(1), delta(1), epsilon(1). CF(0) has three main subunits: a(1), b(2) and c(9-12). The alpha and beta chains form an alternating ring which encloses part of the gamma chain. CF(1) is attached to CF(0) by a central stalk formed by the gamma and epsilon chains, while a peripheral stalk is formed by the delta and b chains.

It localises to the cell inner membrane. The enzyme catalyses ATP + H2O + 4 H(+)(in) = ADP + phosphate + 5 H(+)(out). Its function is as follows. Produces ATP from ADP in the presence of a proton gradient across the membrane. The alpha chain is a regulatory subunit. The chain is ATP synthase subunit alpha 2 from Legionella pneumophila (strain Corby).